A 326-amino-acid polypeptide reads, in one-letter code: Vitamin B12 import system permease protein BtuC (326 aa).

9 consecutive transmembrane segments (helical) span residues 15-35, 61-81, 88-108, 112-132, 146-166, 184-204, 240-260, 274-294, and 302-322; these read WLLCLSVLMLLALLLSLCAGE, LAVLLVGAALAISGAVMQALF, PGLLGVSNGAGVGLIAAVLLG, LPNWALGLCAIAGALIITLIL, LLAGVALGIICSALMTWAIYF, GGVDWRQSWLMLALIPVLLWI, GWMVGVSVALAGAIGFIGLVI, VLLPGCALAGASALLLADIVA, and ELPIGVVTATLGAPVFIWLLL.

This sequence belongs to the binding-protein-dependent transport system permease family. FecCD subfamily. In terms of assembly, the complex is composed of two ATP-binding proteins (BtuD), two transmembrane proteins (BtuC) and a solute-binding protein (BtuF).

The protein localises to the cell inner membrane. Functionally, part of the ABC transporter complex BtuCDF involved in vitamin B12 import. Involved in the translocation of the substrate across the membrane. The protein is Vitamin B12 import system permease protein BtuC of Shigella boydii serotype 18 (strain CDC 3083-94 / BS512).